The primary structure comprises 586 residues: A-type ATP synthase subunit A (586 aa).

233 to 240 provides a ligand contact to ATP; that stretch reads GPFGSGKT.

The protein belongs to the ATPase alpha/beta chains family. In terms of assembly, has multiple subunits with at least A(3), B(3), C, D, E, F, H, I and proteolipid K(x).

It localises to the cell membrane. It carries out the reaction ATP + H2O + 4 H(+)(in) = ADP + phosphate + 5 H(+)(out). Its function is as follows. Component of the A-type ATP synthase that produces ATP from ADP in the presence of a proton gradient across the membrane. The A chain is the catalytic subunit. The chain is A-type ATP synthase subunit A from Methanococcus aeolicus (strain ATCC BAA-1280 / DSM 17508 / OCM 812 / Nankai-3).